Reading from the N-terminus, the 556-residue chain is Formate--tetrahydrofolate ligase (556 aa).

Residue 65–72 participates in ATP binding; sequence TPAGEGKS.

The protein belongs to the formate--tetrahydrofolate ligase family.

It catalyses the reaction (6S)-5,6,7,8-tetrahydrofolate + formate + ATP = (6R)-10-formyltetrahydrofolate + ADP + phosphate. It participates in one-carbon metabolism; tetrahydrofolate interconversion. The polypeptide is Formate--tetrahydrofolate ligase (Natranaerobius thermophilus (strain ATCC BAA-1301 / DSM 18059 / JW/NM-WN-LF)).